A 175-amino-acid chain; its full sequence is Crossover junction endodeoxyribonuclease RuvC (175 aa).

Catalysis depends on residues Asp-8, Glu-67, and Asp-139. Residues Asp-8, Glu-67, and Asp-139 each coordinate Mg(2+).

This sequence belongs to the RuvC family. In terms of assembly, homodimer which binds Holliday junction (HJ) DNA. The HJ becomes 2-fold symmetrical on binding to RuvC with unstacked arms; it has a different conformation from HJ DNA in complex with RuvA. In the full resolvosome a probable DNA-RuvA(4)-RuvB(12)-RuvC(2) complex forms which resolves the HJ. Mg(2+) is required as a cofactor.

It localises to the cytoplasm. The enzyme catalyses Endonucleolytic cleavage at a junction such as a reciprocal single-stranded crossover between two homologous DNA duplexes (Holliday junction).. Functionally, the RuvA-RuvB-RuvC complex processes Holliday junction (HJ) DNA during genetic recombination and DNA repair. Endonuclease that resolves HJ intermediates. Cleaves cruciform DNA by making single-stranded nicks across the HJ at symmetrical positions within the homologous arms, yielding a 5'-phosphate and a 3'-hydroxyl group; requires a central core of homology in the junction. The consensus cleavage sequence is 5'-(A/T)TT(C/G)-3'. Cleavage occurs on the 3'-side of the TT dinucleotide at the point of strand exchange. HJ branch migration catalyzed by RuvA-RuvB allows RuvC to scan DNA until it finds its consensus sequence, where it cleaves and resolves the cruciform DNA. This is Crossover junction endodeoxyribonuclease RuvC from Marinobacter nauticus (strain ATCC 700491 / DSM 11845 / VT8) (Marinobacter aquaeolei).